Consider the following 558-residue polypeptide: Undecaprenyl phosphate-alpha-4-amino-4-deoxy-L-arabinose arabinosyl transferase 1 (558 aa).

The next 12 helical transmembrane spans lie at 4 to 24 (GAGLWLGLLAVFFVLTYLVPL), 87 to 107 (FASVFSTGLSALLVFTVSWTV), 115 to 135 (LLAALIFLSLLLVFGVGTYSV), 136 to 156 (LDPMIALWLNAAMAAHVFALR), 178 to 198 (FMTKGFLALVVPAIAVLPVAL), 207 to 227 (LGYGALAALLAVLVNLPWALA), 257 to 277 (APFWFYLPVLALGSLPWLGLL), 295 to 315 (FLLLCWVVMPLLFFSVAKGKL), 316 to 336 (LTYILPCMAPLALLLAAYGRE), 355 to 375 (AFALCAIVALLLAGSGLLPWA), 383 to 403 (WPRIVIGTLVFAGWLCFAAVS), and 411 to 431 (WALAAFCPLLLSLLVGQIIPQ).

This sequence belongs to the glycosyltransferase 83 family.

Its subcellular location is the cell inner membrane. It carries out the reaction 4-amino-4-deoxy-alpha-L-arabinopyranosyl di-trans,octa-cis-undecaprenyl phosphate + lipid IVA = lipid IIA + di-trans,octa-cis-undecaprenyl phosphate.. It functions in the pathway lipopolysaccharide metabolism; 4-amino-4-deoxy-beta-L-arabinose-lipid A biosynthesis. Its function is as follows. Catalyzes the transfer of the L-Ara4N moiety of the glycolipid undecaprenyl phosphate-alpha-L-Ara4N to lipid A. The modified arabinose is attached to lipid A and is required for resistance to polymyxin and cationic antimicrobial peptides. The protein is Undecaprenyl phosphate-alpha-4-amino-4-deoxy-L-arabinose arabinosyl transferase 1 of Sodalis glossinidius (strain morsitans).